Reading from the N-terminus, the 1300-residue chain is DNA-directed RNA polymerase subunit beta (1300 aa).

Belongs to the RNA polymerase beta chain family. The RNAP catalytic core consists of 2 alpha, 1 beta, 1 beta' and 1 omega subunit. When a sigma factor is associated with the core the holoenzyme is formed, which can initiate transcription.

It carries out the reaction RNA(n) + a ribonucleoside 5'-triphosphate = RNA(n+1) + diphosphate. Its function is as follows. DNA-dependent RNA polymerase catalyzes the transcription of DNA into RNA using the four ribonucleoside triphosphates as substrates. This is DNA-directed RNA polymerase subunit beta from Chlorobium chlorochromatii (strain CaD3).